A 228-amino-acid polypeptide reads, in one-letter code: 2,3-bisphosphoglycerate-dependent phosphoglycerate mutase (228 aa).

Substrate-binding positions include 7-14 (RHGESAWN), 20-21 (TG), R59, 86-89 (ERHY), K97, 113-114 (RR), and 182-183 (GN). The active-site Tele-phosphohistidine intermediate is the H8. E86 functions as the Proton donor/acceptor in the catalytic mechanism.

This sequence belongs to the phosphoglycerate mutase family. BPG-dependent PGAM subfamily.

It catalyses the reaction (2R)-2-phosphoglycerate = (2R)-3-phosphoglycerate. The protein operates within carbohydrate degradation; glycolysis; pyruvate from D-glyceraldehyde 3-phosphate: step 3/5. Catalyzes the interconversion of 2-phosphoglycerate and 3-phosphoglycerate. This chain is 2,3-bisphosphoglycerate-dependent phosphoglycerate mutase, found in Fusobacterium nucleatum subsp. nucleatum (strain ATCC 25586 / DSM 15643 / BCRC 10681 / CIP 101130 / JCM 8532 / KCTC 2640 / LMG 13131 / VPI 4355).